Here is a 190-residue protein sequence, read N- to C-terminus: Segregation and condensation protein B (190 aa).

This sequence belongs to the ScpB family. Homodimer. Homodimerization may be required to stabilize the binding of ScpA to the Smc head domains. Component of a cohesin-like complex composed of ScpA, ScpB and the Smc homodimer, in which ScpA and ScpB bind to the head domain of Smc. The presence of the three proteins is required for the association of the complex with DNA.

It localises to the cytoplasm. Participates in chromosomal partition during cell division. May act via the formation of a condensin-like complex containing Smc and ScpA that pull DNA away from mid-cell into both cell halves. The sequence is that of Segregation and condensation protein B from Bacillus cereus (strain ATCC 10987 / NRS 248).